The sequence spans 128 residues: Large ribosomal subunit protein bL12 (128 aa).

It belongs to the bacterial ribosomal protein bL12 family. In terms of assembly, homodimer. Part of the ribosomal stalk of the 50S ribosomal subunit. Forms a multimeric L10(L12)X complex, where L10 forms an elongated spine to which 2 to 4 L12 dimers bind in a sequential fashion. Binds GTP-bound translation factors.

Forms part of the ribosomal stalk which helps the ribosome interact with GTP-bound translation factors. Is thus essential for accurate translation. This is Large ribosomal subunit protein bL12 from Sulfurihydrogenibium sp. (strain YO3AOP1).